Here is a 576-residue protein sequence, read N- to C-terminus: Proline--tRNA ligase (576 aa).

It belongs to the class-II aminoacyl-tRNA synthetase family. ProS type 1 subfamily. As to quaternary structure, homodimer.

It is found in the cytoplasm. It carries out the reaction tRNA(Pro) + L-proline + ATP = L-prolyl-tRNA(Pro) + AMP + diphosphate. Functionally, catalyzes the attachment of proline to tRNA(Pro) in a two-step reaction: proline is first activated by ATP to form Pro-AMP and then transferred to the acceptor end of tRNA(Pro). As ProRS can inadvertently accommodate and process non-cognate amino acids such as alanine and cysteine, to avoid such errors it has two additional distinct editing activities against alanine. One activity is designated as 'pretransfer' editing and involves the tRNA(Pro)-independent hydrolysis of activated Ala-AMP. The other activity is designated 'posttransfer' editing and involves deacylation of mischarged Ala-tRNA(Pro). The misacylated Cys-tRNA(Pro) is not edited by ProRS. The protein is Proline--tRNA ligase of Leptospira interrogans serogroup Icterohaemorrhagiae serovar copenhageni (strain Fiocruz L1-130).